The chain runs to 92 residues: C-C motif chemokine 22 (92 aa).

A signal peptide spans 1 to 24 (MATLRVPLLVALVLLAVAIQTSDA). Cystine bridges form between Cys-36–Cys-60 and Cys-37–Cys-76.

Belongs to the intercrine beta (chemokine CC) family. In terms of tissue distribution, expressed by activated splenic B-lymphocytes and dendritic cells. Low expression in lung, thymocytes, lymph node, and unstimulated splenic cells.

Its subcellular location is the secreted. Chemotactic for activated T-lymphocytes. May play an important role in the collaboration of dendritic cells and B-lymphocytes with T-cells in immune responses. This chain is C-C motif chemokine 22 (Ccl22), found in Mus musculus (Mouse).